The sequence spans 119 residues: Large ribosomal subunit protein bL19 (119 aa).

The protein belongs to the bacterial ribosomal protein bL19 family.

This protein is located at the 30S-50S ribosomal subunit interface and may play a role in the structure and function of the aminoacyl-tRNA binding site. The chain is Large ribosomal subunit protein bL19 from Psychromonas ingrahamii (strain DSM 17664 / CCUG 51855 / 37).